We begin with the raw amino-acid sequence, 58 residues long: Transactivator protein ORF121 (58 aa).

Its function is as follows. Stimulates the expression of 39k gene most probably by increasing IE1 expression. This Lepidoptera (butterflies and moths) protein is Transactivator protein ORF121 (AC121).